The chain runs to 39 residues: Photosystem II reaction center protein J (39 aa).

A helical transmembrane segment spans residues 7 to 27 (IPLWIVAVVAGMGVIAVVGIF).

It belongs to the PsbJ family. As to quaternary structure, PSII is composed of 1 copy each of membrane proteins PsbA, PsbB, PsbC, PsbD, PsbE, PsbF, PsbH, PsbI, PsbJ, PsbK, PsbL, PsbM, PsbT, PsbX, PsbY, PsbZ, Psb30/Ycf12, peripheral proteins PsbO, CyanoQ (PsbQ), PsbU, PsbV and a large number of cofactors. It forms dimeric complexes.

The protein resides in the cellular thylakoid membrane. This protein is a component of the reaction center of photosystem II. Its function is as follows. One of the components of the core complex of photosystem II (PSII). PSII is a light-driven water:plastoquinone oxidoreductase that uses light energy to abstract electrons from H(2)O, generating O(2) and a proton gradient subsequently used for ATP formation. It consists of a core antenna complex that captures photons, and an electron transfer chain that converts photonic excitation into a charge separation. The protein is Photosystem II reaction center protein J of Picosynechococcus sp. (strain ATCC 27264 / PCC 7002 / PR-6) (Agmenellum quadruplicatum).